We begin with the raw amino-acid sequence, 127 residues long: Large ribosomal subunit protein bL17 (127 aa).

It belongs to the bacterial ribosomal protein bL17 family. Part of the 50S ribosomal subunit. Contacts protein L32.

The polypeptide is Large ribosomal subunit protein bL17 (Xanthomonas euvesicatoria pv. vesicatoria (strain 85-10) (Xanthomonas campestris pv. vesicatoria)).